The following is a 51-amino-acid chain: DNA-directed RNA polymerases II, IV and V subunit 12 (51 aa).

Residues Cys-12, Cys-15, Cys-29, and Cys-32 each contribute to the Zn(2+) site.

It belongs to the archaeal Rpo12/eukaryotic RPC10 RNA polymerase subunit family. In terms of assembly, component of the RNA polymerase II, IV and V complexes. Associates with the mediator complex. Interacts with NRPD1.

The protein resides in the nucleus. Functionally, DNA-dependent RNA polymerase catalyzes the transcription of DNA into RNA using the four ribonucleoside triphosphates as substrates. Component of RNA polymerase II which synthesizes mRNA precursors and many functional non-coding RNAs. Pol II is the central component of the basal RNA polymerase II transcription machinery. It is composed of mobile elements that move relative to each other. Component of RNA polymerases IV and V which mediate short-interfering RNAs (siRNA) accumulation and subsequent RNA-directed DNA methylation-dependent (RdDM) transcriptional gene silencing (TGS) of endogenous repeated sequences, including transposable elements. The sequence is that of DNA-directed RNA polymerases II, IV and V subunit 12 (NRPB12) from Arabidopsis thaliana (Mouse-ear cress).